Here is a 114-residue protein sequence, read N- to C-terminus: Putative movement protein (114 aa).

A helical transmembrane segment spans residues 27-47 (LIGIILLVTVCLIVLWVCIML). Residues 79 to 114 (RTPFEATGPERERNWDARRQSTTVNPASQPNTGSVF) are disordered. Basic and acidic residues predominate over residues 86–97 (GPERERNWDARR). Over residues 98-114 (QSTTVNPASQPNTGSVF) the composition is skewed to polar residues.

The protein belongs to the nanovirus movement protein family.

The protein resides in the host cell membrane. In terms of biological role, may transport viral genome to neighboring plant cells directly through plasmosdesmata, without any budding. The movement protein allows efficient cell to cell propagation, by bypassing the host cell wall barrier. In Faba bean necrotic yellows virus (isolate Syrian SV292-88) (FBNYV), this protein is Putative movement protein (DNA-M).